The following is a 153-amino-acid chain: SsrA-binding protein (153 aa).

The tract at residues 129 to 153 (KREDMKKKDQSREMAQALREKSKSH) is disordered.

The protein belongs to the SmpB family.

Its subcellular location is the cytoplasm. In terms of biological role, required for rescue of stalled ribosomes mediated by trans-translation. Binds to transfer-messenger RNA (tmRNA), required for stable association of tmRNA with ribosomes. tmRNA and SmpB together mimic tRNA shape, replacing the anticodon stem-loop with SmpB. tmRNA is encoded by the ssrA gene; the 2 termini fold to resemble tRNA(Ala) and it encodes a 'tag peptide', a short internal open reading frame. During trans-translation Ala-aminoacylated tmRNA acts like a tRNA, entering the A-site of stalled ribosomes, displacing the stalled mRNA. The ribosome then switches to translate the ORF on the tmRNA; the nascent peptide is terminated with the 'tag peptide' encoded by the tmRNA and targeted for degradation. The ribosome is freed to recommence translation, which seems to be the essential function of trans-translation. This is SsrA-binding protein from Geobacter sulfurreducens (strain ATCC 51573 / DSM 12127 / PCA).